The chain runs to 279 residues: Large ribosomal subunit protein uL2 (279 aa).

Disordered stretches follow at residues 34-58 (LRPLHKTGGRNNTGRITTRHKGGGH) and 225-279 (VMNP…KNKR). The segment covering 251 to 268 (GKPEGRTRRPNKESDKLI) has biased composition (basic and acidic residues). The segment covering 269–279 (VRRRRTGKNKR) has biased composition (basic residues).

It belongs to the universal ribosomal protein uL2 family. In terms of assembly, part of the 50S ribosomal subunit. Forms a bridge to the 30S subunit in the 70S ribosome.

Its function is as follows. One of the primary rRNA binding proteins. Required for association of the 30S and 50S subunits to form the 70S ribosome, for tRNA binding and peptide bond formation. It has been suggested to have peptidyltransferase activity; this is somewhat controversial. Makes several contacts with the 16S rRNA in the 70S ribosome. The sequence is that of Large ribosomal subunit protein uL2 from Micrococcus luteus (strain ATCC 4698 / DSM 20030 / JCM 1464 / CCM 169 / CCUG 5858 / IAM 1056 / NBRC 3333 / NCIMB 9278 / NCTC 2665 / VKM Ac-2230) (Micrococcus lysodeikticus).